The following is a 301-amino-acid chain: Ribonuclease HIII (301 aa).

An RNase H type-2 domain is found at 88 to 301 (WSVLGSDEVG…TQKARQLARQ (214 aa)). The a divalent metal cation site is built by Asp94, Glu95, and Asp197.

It belongs to the RNase HII family. RnhC subfamily. Mn(2+) serves as cofactor. The cofactor is Mg(2+).

Its subcellular location is the cytoplasm. The enzyme catalyses Endonucleolytic cleavage to 5'-phosphomonoester.. In terms of biological role, endonuclease that specifically degrades the RNA of RNA-DNA hybrids. The polypeptide is Ribonuclease HIII (Limosilactobacillus fermentum (strain NBRC 3956 / LMG 18251) (Lactobacillus fermentum)).